Reading from the N-terminus, the 321-residue chain is HPr kinase/phosphorylase (321 aa).

Active-site residues include His-143 and Lys-164. An ATP-binding site is contributed by 158–165; the sequence is GKSGVGKS. Ser-165 serves as a coordination point for Mg(2+). Asp-182 acts as the Proton acceptor; for phosphorylation activity. Proton donor; for dephosphorylation activity in catalysis. An important for the catalytic mechanism of both phosphorylation and dephosphorylation region spans residues 206-215; the sequence is MEIRGLGILN. A Mg(2+)-binding site is contributed by Glu-207. Residue Arg-248 is part of the active site. The important for the catalytic mechanism of dephosphorylation stretch occupies residues 269-274; the sequence is PVRPGR.

This sequence belongs to the HPrK/P family. In terms of assembly, homohexamer. Mg(2+) is required as a cofactor.

The enzyme catalyses [HPr protein]-L-serine + ATP = [HPr protein]-O-phospho-L-serine + ADP + H(+). It catalyses the reaction [HPr protein]-O-phospho-L-serine + phosphate + H(+) = [HPr protein]-L-serine + diphosphate. Catalyzes the ATP- as well as the pyrophosphate-dependent phosphorylation of a specific serine residue in HPr, a phosphocarrier protein of the phosphoenolpyruvate-dependent sugar phosphotransferase system (PTS). HprK/P also catalyzes the pyrophosphate-producing, inorganic phosphate-dependent dephosphorylation (phosphorolysis) of seryl-phosphorylated HPr (P-Ser-HPr). This Leptospira interrogans serogroup Icterohaemorrhagiae serovar copenhageni (strain Fiocruz L1-130) protein is HPr kinase/phosphorylase.